A 444-amino-acid polypeptide reads, in one-letter code: Glutamate--methylamine ligase (444 aa).

One can recognise a GS beta-grasp domain in the interval 14 to 97 (HHVKYVLAQF…LVCDGHVNGK (84 aa)). A GS catalytic domain is found at 103-444 (TRVVLKQQIA…WEINRYVQFY (342 aa)).

This sequence belongs to the glutamine synthetase family. Type 3 subfamily. Mg(2+) serves as cofactor.

The catalysed reaction is methylamine + L-glutamate + ATP = N(5)-methyl-L-glutamine + ADP + phosphate + H(+). It carries out the reaction ethylamine + L-glutamate + ATP = N(5)-ethyl-L-glutamine + ADP + phosphate + H(+). Formation of theanine is repressed by a high concentration of glutamic acid. Its function is as follows. Catalyzes the formation of N(5)-methyl-L-glutamine from glutamate and methylamine. In vitro, can also use ethylamine, hydroxylamine and ammonia, with 75%, 40% and 1% activity compared to methylamine, respectively. The polypeptide is Glutamate--methylamine ligase (Methylovorus mays).